Consider the following 903-residue polypeptide: Dynamin-like GTPase msp1, mitochondrial (903 aa).

The transit peptide at 1–78 directs the protein to the mitochondrion; the sequence is MGISWFLSRF…RFFSFSSISR (78 aa). The helical transmembrane segment at 86–103 threads the bilayer; the sequence is LPVAGFSLVAGGAAYIGA. Basic and acidic residues predominate over residues 167–188; that stretch reads VLQAERAKEHRSNSNDKQKSSD. Residues 167-198 are disordered; it reads VLQAERAKEHRSNSNDKQKSSDNDEDPNDTTV. The chain crosses the membrane as a helical span at residues 198 to 214; that stretch reads VGIGAALAASILSVDSV. One can recognise a Dynamin-type G domain in the interval 260 to 531; sequence AVTLPSIVVI…LEYTMSKNLQ (272 aa). The interval 270–277 is G1 motif; the sequence is GSQSSGKS. GTP-binding residues include S273, S274, G275, K276, S277, S278, and G292. Position 277 (S277) interacts with Mg(2+). The tract at residues 296–298 is G2 motif; that stretch reads VTR. Mg(2+) contacts are provided by T297 and D370. A G3 motif region spans residues 370–373; that stretch reads DLPG. A G4 motif region spans residues 438–441; that stretch reads TKMD. Residues K439, D441, and S468 each contribute to the GTP site. Residues 467-470 form a G5 motif region; it reads ISRI. Residues 691-805 are paddle region; sequence ATSEQVENCV…VLKSRACKHK (115 aa). A disulfide bond links C802 and C811. The GED domain maps to 805–898; the sequence is KEAKYTCPEI…KINSLVILEQ (94 aa).

Belongs to the TRAFAC class dynamin-like GTPase superfamily. Dynamin/Fzo/YdjA family. In terms of assembly, homooligomer. Interacts with cdr1. Post-translationally, cleavage of the transit peptide by mitochondrial processing protease (MPP) produces a long integral membrane form of msp1 (l-msp1). Further processing by a rhomboid protease after the transmembrane regions produces a short peripheral membrane form of msp1 (s-msp1). Both isoforms are required for full activity.

The protein localises to the mitochondrion inner membrane. It localises to the mitochondrion intermembrane space. The enzyme catalyses GTP + H2O = GDP + phosphate + H(+). Its function is as follows. Dynamin-related GTPase that is essential for normal mitochondrial morphology by mediating fusion of the mitochondrial inner membranes and maintaining respiratory chain function. Exists in two forms: the transmembrane, long form (Dynamin-like GTPase msp1, long form; l-msp1), which is tethered to the inner mitochondrial membrane, and the short soluble form (Dynamin-like GTPase msp1, short form; s-msp1), which results from proteolytic cleavage and localizes in the intermembrane space. Both forms (l-msp1 and s-msp1) cooperate to catalyze the fusion of the mitochondrial inner membrane. Its role in mitochondrial morphology is required for mitochondrial genome maintenance. Constitutes the transmembrane long form (l-msp1) that plays a central role in mitochondrial inner membrane fusion. L-msp1 and the soluble short form (s-msp1) form higher-order helical assemblies that coordinate the fusion of mitochondrial inner membranes. Inner membrane-anchored l-msp1 molecules initiate membrane remodeling by recruiting soluble s-msp1 to rapidly polymerize into a flexible cylindrical scaffold encaging the mitochondrial inner membrane. Once at the membrane surface, the formation of s-msp1 helices induce bilayer curvature. Msp1 dimerization through the paddle region, which inserts into cardiolipin-containing membrane, promotes GTP hydrolysis and the helical assembly of a flexible msp1 lattice on the membrane, which drives membrane curvature and mitochondrial fusion. In terms of biological role, constitutes the soluble short form (s-msp1) generated by cleavage, which plays a central role in mitochondrial inner membrane fusion. The transmembrane long form (l-msp1) and the s-msp1 form higher-order helical assemblies that coordinate the fusion of mitochondrial inner membranes. Inner membrane-anchored l-msp1 molecules initiate membrane remodeling by recruiting soluble s-msp1 to rapidly polymerize into a flexible cylindrical scaffold encaging the mitochondrial inner membrane. Once at the membrane surface, the formation of s-msp1 helices induce bilayer curvature. Msp1 dimerization through the paddle region, which inserts into cardiolipin-containing membrane, promotes GTP hydrolysis and the helical assembly of a flexible msp1 lattice on the membrane, which drives membrane curvature and mitochondrial fusion. In Schizosaccharomyces pombe (strain 972 / ATCC 24843) (Fission yeast), this protein is Dynamin-like GTPase msp1, mitochondrial.